A 508-amino-acid chain; its full sequence is tRNA-2-methylthio-N(6)-dimethylallyladenosine synthase (508 aa).

Residues 1 to 21 (MNEEQRKASGQVSSSDKKSEK) are disordered. An MTTase N-terminal domain is found at 65 to 183 (RKFYIRTYGC…LPELLSECYL (119 aa)). Residues Cys74, Cys110, Cys144, Cys220, Cys224, and Cys227 each coordinate [4Fe-4S] cluster. Residues 206–436 (RQGKIKGWVN…NALVNEISAK (231 aa)) form the Radical SAM core domain. Positions 439–502 (KEYEGQTVEV…TWSLDGEMVG (64 aa)) constitute a TRAM domain.

This sequence belongs to the methylthiotransferase family. MiaB subfamily. In terms of assembly, monomer. The cofactor is [4Fe-4S] cluster.

Its subcellular location is the cytoplasm. It carries out the reaction N(6)-dimethylallyladenosine(37) in tRNA + (sulfur carrier)-SH + AH2 + 2 S-adenosyl-L-methionine = 2-methylsulfanyl-N(6)-dimethylallyladenosine(37) in tRNA + (sulfur carrier)-H + 5'-deoxyadenosine + L-methionine + A + S-adenosyl-L-homocysteine + 2 H(+). Catalyzes the methylthiolation of N6-(dimethylallyl)adenosine (i(6)A), leading to the formation of 2-methylthio-N6-(dimethylallyl)adenosine (ms(2)i(6)A) at position 37 in tRNAs that read codons beginning with uridine. The sequence is that of tRNA-2-methylthio-N(6)-dimethylallyladenosine synthase from Bacillus pumilus (strain SAFR-032).